Reading from the N-terminus, the 272-residue chain is Putative hydro-lyase RPD_1846 (272 aa).

This sequence belongs to the D-glutamate cyclase family.

The chain is Putative hydro-lyase RPD_1846 from Rhodopseudomonas palustris (strain BisB5).